A 549-amino-acid polypeptide reads, in one-letter code: GPI mannosyltransferase 3 (549 aa).

Residues 1-39 (MAYNNSVRKRKKDIQDANGFHRDQTIDKKSRATNKLEES) are Cytoplasmic-facing. Residues 40–60 (LPTFKVFIVLFFIRLLNSLTI) traverse the membrane as a helical segment. Residues 61-119 (KTFFQADEYYQCLEPAYNFVFGSGYITWEWEEGIRSSIHPLIYALGYKMVSYVHFDDKP) lie on the Lumenal side of the membrane. A helical transmembrane segment spans residues 120–140 (IILIPKVIGALIASIGEVYLY). The Cytoplasmic portion of the chain corresponds to 141 to 154 (KFSKKFTKNEKLAR). The chain crosses the membrane as a helical span at residues 155 to 175 (LTLILSLLSPFNWYIITRSFS). Over 176 to 205 (NSFEMVLTTIAFTYWPWDNVISYKDISMSC) the chain is Lumenal. Residues 206–226 (IIAFISCIVRPTNGIIWLYLG) traverse the membrane as a helical segment. Residues 227 to 246 (INFMIKNYKLEKQSGKLMKL) are Cytoplasmic-facing. Residues 247-267 (ILILSIELILILLVNTGLDYI) form a helical membrane-spanning segment. Topologically, residues 268–289 (FYGKTTFPLYNFVEFNVIRNLS) are lumenal. Asn287 is a glycosylation site (N-linked (GlcNAc...) asparagine). The chain crosses the membrane as a helical span at residues 290–310 (IFYGVAPWHFYLFQGVPIILM). The Cytoplasmic portion of the chain corresponds to 311-328 (TYLPWLLHSAIVLKKYKS). The chain crosses the membrane as a helical span at residues 329–349 (LLGQVAILMIGGFSLIDHKEI). Position 350 (Arg350) is a topological domain, lumenal. A helical transmembrane segment spans residues 351–367 (FIYPLQPIFMLMVAYSI). The Cytoplasmic segment spans residues 368–379 (HETKHKFQRLYK). A helical transmembrane segment spans residues 380-400 (FLVPVIIILNLIIAIFFTQVH). The Lumenal portion of the chain corresponds to 401 to 549 (ERGVIDIVQY…KGDIIVYCQI (149 aa)). N-linked (GlcNAc...) asparagine glycosylation is present at Asn442.

This sequence belongs to the glycosyltransferase 22 family. PIGB subfamily.

The protein resides in the endoplasmic reticulum membrane. Its pathway is glycolipid biosynthesis; glycosylphosphatidylinositol-anchor biosynthesis. In terms of biological role, mannosyltransferase involved in glycosylphosphatidylinositol-anchor biosynthesis. Transfers the third mannose to Man2-GlcN-acyl-PI during GPI precursor assembly. This is GPI mannosyltransferase 3 (GPI10) from Debaryomyces hansenii (strain ATCC 36239 / CBS 767 / BCRC 21394 / JCM 1990 / NBRC 0083 / IGC 2968) (Yeast).